Consider the following 240-residue polypeptide: Protein unc-119 homolog A (240 aa).

The span at 1 to 12 shows a compositional bias: gly residues; the sequence is MKVKKGGGGAGT. The disordered stretch occupies residues 1–61; that stretch reads MKVKKGGGGA…GPLQRKQRIG (61 aa). Over residues 13 to 23 the composition is skewed to low complexity; the sequence is GAEPASGAPGP. A phosphoserine; by CK2 mark is found at Ser-37, Ser-39, and Ser-41. A tetradecanoate-binding site is contributed by Tyr-131.

It belongs to the PDE6D/unc-119 family. Interacts with CABP4; in the absence of calcium. May interact with GTP-bound ARL1. Interacts with ARL2 and ARL3 (GTP-bound forms); this promotes the release of myristoylated cargo proteins. Found in a complex with ARL3, RP2 and UNC119; RP2 induces hydrolysis of GTP ARL3 in the complex, leading to the release of UNC119. Interacts with NPHP3 (when myristoylated). Interacts with CYS1 (when myristoylated). Interacts with MACIR; interaction only takes place when UNC119 is not liganded with myristoylated proteins. Interacts with LCK; this interaction plays a crucial role in activation of LCK. Interacts with FYN. Interacts with RAB11A; in a cell cycle-dependent manner. Interacts with LYN (via SH2 and SH3 domains); leading to LYN activation. Interacts with DNM1; leading to a decrease of DNM1 GTPase activity. Found in a complex with ABL1, ABL2, CRK and UNC119; leading to the inhibition of CRK phosphorylation by ABL kinases. Interacts with CD44. Interacts with KLHL18 (via kelch repeats). Interacts with PPP3CA, PPP3CB and PPP3CC. Interacts with USP48; this interaction promotes UNC119 stability. Phosphorylation suppresses its interaction with KLHL18 and down-regulates its KLHL18-mediated degradation. Phosphorylated more under light conditions than dark conditions. Dephosphorylated by calcineurin.

Its subcellular location is the cytoplasm. The protein localises to the cytoskeleton. It is found in the microtubule organizing center. It localises to the centrosome. The protein resides in the spindle. Its subcellular location is the spindle pole. Involved in synaptic functions in photoreceptor cells, the signal transduction in immune cells as a Src family kinase activator, endosome recycling, the uptake of bacteria and endocytosis, protein trafficking in sensory neurons and as lipid-binding chaperone with specificity for a diverse subset of myristoylated proteins. Specifically binds the myristoyl moiety of a subset of N-terminally myristoylated proteins and is required for their localization. Binds myristoylated GNAT1 and is required for G-protein localization and trafficking in sensory neurons. Probably plays a role in trafficking proteins in photoreceptor cells. Plays important roles in mediating Src family kinase signals for the completion of cytokinesis via RAB11A. The polypeptide is Protein unc-119 homolog A (UNC119) (Canis lupus familiaris (Dog)).